The primary structure comprises 272 residues: Tryptophan synthase alpha chain (272 aa).

Catalysis depends on proton acceptor residues E49 and E60.

This sequence belongs to the TrpA family. Tetramer of two alpha and two beta chains.

It catalyses the reaction (1S,2R)-1-C-(indol-3-yl)glycerol 3-phosphate + L-serine = D-glyceraldehyde 3-phosphate + L-tryptophan + H2O. Its pathway is amino-acid biosynthesis; L-tryptophan biosynthesis; L-tryptophan from chorismate: step 5/5. Functionally, the alpha subunit is responsible for the aldol cleavage of indoleglycerol phosphate to indole and glyceraldehyde 3-phosphate. This is Tryptophan synthase alpha chain from Legionella pneumophila (strain Corby).